Consider the following 391-residue polypeptide: MPLQLLSQRLEKTQHDGLYRSLRSVERTTPQVFVEGRQALLFCSNNYLGLAEHPSLAQAAADAALQYGTSSAASRLVSGNQPLHAMLEAKLSAWKGTETALLFNSGYAANTGIIAALAGRGDIIFSDRLNHASIIDGALLSGARLIRYPHNDTLALARLLEQHQTDGLRLIVTDGVFSMDGDIAPLQGIADLAEQHRALLMVDDAHAGGVLGQQGRGTVDFCGVTGRVAIQMGTFGKALGSFGAYAACSRLVRDYLINRSRSLIFSTSLPPAVLAASAAAVELVQAEEGQQLRQQLTDNSHLLRYLLQQAGYKVPDGCTPIVPVMVGEAETTTRFSTRLLEEGVFVQGIRPPTVPKGTSRLRCTVMASHSPDQIQQAVAAITRVGRELGVL.

Arginine 20 serves as a coordination point for substrate. 106 to 107 (GY) lines the pyridoxal 5'-phosphate pocket. Histidine 131 is a binding site for substrate. Positions 178, 206, and 234 each coordinate pyridoxal 5'-phosphate. At lysine 237 the chain carries N6-(pyridoxal phosphate)lysine. Threonine 353 lines the substrate pocket.

This sequence belongs to the class-II pyridoxal-phosphate-dependent aminotransferase family. BioF subfamily. In terms of assembly, homodimer. Pyridoxal 5'-phosphate is required as a cofactor.

It carries out the reaction 6-carboxyhexanoyl-[ACP] + L-alanine + H(+) = (8S)-8-amino-7-oxononanoate + holo-[ACP] + CO2. It functions in the pathway cofactor biosynthesis; biotin biosynthesis. Catalyzes the decarboxylative condensation of pimeloyl-[acyl-carrier protein] and L-alanine to produce 8-amino-7-oxononanoate (AON), [acyl-carrier protein], and carbon dioxide. This is 8-amino-7-oxononanoate synthase from Trichlorobacter lovleyi (strain ATCC BAA-1151 / DSM 17278 / SZ) (Geobacter lovleyi).